We begin with the raw amino-acid sequence, 308 residues long: ABC transporter protein AbcA (308 aa).

An ABC transporter domain is found at Leu-6–Asp-245. Residue Gly-58–Ser-65 participates in ATP binding.

It belongs to the ABC transporter superfamily.

Its function is as follows. Influences the expression of the surface array protein gene (vapA). May have both regulatory and transport activities. The polypeptide is ABC transporter protein AbcA (abcA) (Aeromonas salmonicida).